The chain runs to 143 residues: Fluoride-specific ion channel FluC 1 (143 aa).

A run of 4 helical transmembrane segments spans residues 13 to 33 (VLVGLVFLGGCLGTLIRSVIA), 42 to 62 (GVPWGTLAINLVGAFVLATLL), 80 to 100 (LCIGTGLLGGFTTYSALTVEA), and 111 to 131 (WGIAYLLTSVAAGALLAWVVI). Residues Gly88 and Thr91 each contribute to the Na(+) site.

It belongs to the fluoride channel Fluc/FEX (TC 1.A.43) family.

It localises to the cell membrane. It catalyses the reaction fluoride(in) = fluoride(out). Na(+) is not transported, but it plays an essential structural role and its presence is essential for fluoride channel function. Fluoride-specific ion channel. Important for reducing fluoride concentration in the cell, thus reducing its toxicity. The polypeptide is Fluoride-specific ion channel FluC 1 (Cutibacterium acnes (strain DSM 16379 / KPA171202) (Propionibacterium acnes)).